A 584-amino-acid chain; its full sequence is Methionine--tRNA ligase (584 aa).

The 'HIGH' region motif lies at 12 to 22; that stretch reads PYANGDLHLGH. The Zn(2+) site is built by cysteine 144, cysteine 147, cysteine 157, and cysteine 160. The short motif at 334 to 338 is the 'KMSKS' region element; sequence QFSTS. Threonine 337 serves as a coordination point for ATP. The interval 541–563 is disordered; that stretch reads EGRDRWAPSELEAGRPLPPPQPL.

It belongs to the class-I aminoacyl-tRNA synthetase family. MetG type 1 subfamily. In terms of assembly, monomer. Zn(2+) serves as cofactor.

Its subcellular location is the cytoplasm. The catalysed reaction is tRNA(Met) + L-methionine + ATP = L-methionyl-tRNA(Met) + AMP + diphosphate. Its function is as follows. Is required not only for elongation of protein synthesis but also for the initiation of all mRNA translation through initiator tRNA(fMet) aminoacylation. This chain is Methionine--tRNA ligase, found in Thermomicrobium roseum (strain ATCC 27502 / DSM 5159 / P-2).